The chain runs to 661 residues: Coagulation factor XIII B chain (661 aa).

The first 20 residues, 1–20 (MRLKNLTFIIILIISGELYA), serve as a signal peptide directing secretion. Sushi domains are found at residues 24 to 88 (PCGF…PRCF), 89 to 148 (KKCT…TCRK), 151 to 210 (ETCL…KCTK), 211 to 269 (LKCS…VCEG), 272 to 329 (NRCP…KCIE), 334 to 391 (VACE…ECVE), 394 to 452 (ENCK…VCLE), 453 to 516 (PCTV…PLCT), 522 to 580 (GMCT…LCLE), and 581 to 647 (PCTL…PRCI). Disulfide bonds link cysteine 25–cysteine 76, cysteine 59–cysteine 87, cysteine 91–cysteine 135, cysteine 118–cysteine 146, cysteine 153–cysteine 197, cysteine 180–cysteine 208, cysteine 213–cysteine 255, cysteine 241–cysteine 267, cysteine 274–cysteine 316, cysteine 302–cysteine 327, cysteine 336–cysteine 378, cysteine 364–cysteine 389, cysteine 396–cysteine 439, cysteine 425–cysteine 450, cysteine 454–cysteine 505, cysteine 486–cysteine 515, cysteine 524–cysteine 567, cysteine 553–cysteine 578, cysteine 582–cysteine 636, and cysteine 616–cysteine 646. N-linked (GlcNAc...) asparagine glycosylation is present at asparagine 162. Asparagine 545 carries an N-linked (GlcNAc...) asparagine glycan. Positions 617–619 (RGD) match the Cell attachment site motif.

Tetramer of two A chains (F13A1) and two B (F13B) chains.

Its subcellular location is the secreted. The B chain of factor XIII is not catalytically active, but is thought to stabilize the A subunits and regulate the rate of transglutaminase formation by thrombin. This is Coagulation factor XIII B chain (F13B) from Homo sapiens (Human).